The primary structure comprises 30 residues: Antifungal protein Lap (30 aa).

In terms of biological role, displays antifungal activity against M.arachidicola and P.piricola, but not against R.solani, C.gossypii and C.comatus. Inhibits mycelial growth in P.piricola with an IC(50) of 70 nM. Displays very low cell-free translation inhibitory activity in a rabbit reticulocyte lysate system (IC(50)=70 uM) but is able to inhibit HIV-1 reverse transcriptase activity (IC(50)=5.2 nM). This chain is Antifungal protein Lap, found in Lyophyllum shimeji (Hon-shimeji).